Consider the following 453-residue polypeptide: tRNA modification GTPase MnmE (453 aa).

The (6S)-5-formyl-5,6,7,8-tetrahydrofolate site is built by arginine 22, glutamate 79, and lysine 119. Residues 215 to 376 (GMKVVIAGRP…LRNHLKECMG (162 aa)) form the TrmE-type G domain. Asparagine 225 contributes to the K(+) binding site. Residues 225 to 230 (NAGKSS), 244 to 250 (TDIAGTT), 269 to 272 (DTAG), and 334 to 337 (NKAD) each bind GTP. Serine 229 contacts Mg(2+). K(+) contacts are provided by threonine 244, isoleucine 246, and threonine 249. Residue threonine 250 coordinates Mg(2+). Position 453 (lysine 453) interacts with (6S)-5-formyl-5,6,7,8-tetrahydrofolate.

The protein belongs to the TRAFAC class TrmE-Era-EngA-EngB-Septin-like GTPase superfamily. TrmE GTPase family. Homodimer. Heterotetramer of two MnmE and two MnmG subunits. It depends on K(+) as a cofactor.

It localises to the cytoplasm. Exhibits a very high intrinsic GTPase hydrolysis rate. Involved in the addition of a carboxymethylaminomethyl (cmnm) group at the wobble position (U34) of certain tRNAs, forming tRNA-cmnm(5)s(2)U34. This chain is tRNA modification GTPase MnmE, found in Vibrio vulnificus (strain CMCP6).